A 128-amino-acid chain; its full sequence is Aspartate 1-decarboxylase (128 aa).

Residue serine 25 is the Schiff-base intermediate with substrate; via pyruvic acid of the active site. Serine 25 carries the pyruvic acid (Ser) modification. Threonine 57 is a substrate binding site. The Proton donor role is filled by tyrosine 58. 73-75 (GAA) contacts substrate.

Belongs to the PanD family. As to quaternary structure, heterooctamer of four alpha and four beta subunits. The cofactor is pyruvate. Is synthesized initially as an inactive proenzyme, which is activated by self-cleavage at a specific serine bond to produce a beta-subunit with a hydroxyl group at its C-terminus and an alpha-subunit with a pyruvoyl group at its N-terminus.

The protein resides in the cytoplasm. It carries out the reaction L-aspartate + H(+) = beta-alanine + CO2. It functions in the pathway cofactor biosynthesis; (R)-pantothenate biosynthesis; beta-alanine from L-aspartate: step 1/1. Functionally, catalyzes the pyruvoyl-dependent decarboxylation of aspartate to produce beta-alanine. This chain is Aspartate 1-decarboxylase, found in Chlorobaculum parvum (strain DSM 263 / NCIMB 8327) (Chlorobium vibrioforme subsp. thiosulfatophilum).